Consider the following 615-residue polypeptide: MTIKILPPQLANQIAAGEVVERPASVVKELIENSLDAGATHIQIEIENGGANLIRIRDNGIGIAKDELHLALARHATSKIASLDDLEMILSLGFRGEALASISSVSRLTLTSRTAQQNEAWQVYAQGRDMETSITPASHPIGTTVEVANLFFNTPARRKFLRTDKTEFAHIDEVIRRIALAKPQVAFTLTHNNKLIHRYKSAVTNEQKIKRIATICGNDFMQNALHIDWKHNDLHLSGWVIQPQFARHQNDLNYCYINGRMVKDKVITHAIRQAYSEYLSNEKYPAFVLFIDLNPNEVDVNVHPTKHEVRFHQARLIHDFIYQGMTNALTSEQTNIPIQSEQSNPTKVAEPQGIWNLTTHNKGNRATAGKNIFAQQPKDYDKKSSQFKPHFAANYSEVTPKKAVQKAYAELLATHEEKTIASSTLPHQFTHNATHISEQKNVLHALALIENKALLLQQNQQYFLLSIQALQHFNIRLQLQQSNIAQQTLLIPILLRLNKQQYQSWQQQALFFQQSGFDFTDNSAQRRITLNRLPICLRTQNIQKIILQLLDQPHEKYTIFLTALCSHLEFPSLSTFSEAVNLLTKTEQQFSTQHQLEFQSLLVKIEWDHYLDKLQ.

This sequence belongs to the DNA mismatch repair MutL/HexB family.

In terms of biological role, this protein is involved in the repair of mismatches in DNA. It is required for dam-dependent methyl-directed DNA mismatch repair. May act as a 'molecular matchmaker', a protein that promotes the formation of a stable complex between two or more DNA-binding proteins in an ATP-dependent manner without itself being part of a final effector complex. This chain is DNA mismatch repair protein MutL, found in Histophilus somni (strain 2336) (Haemophilus somnus).